Reading from the N-terminus, the 215-residue chain is Cytochrome b6 (215 aa).

The helical transmembrane segment at 32-52 threads the bilayer; it reads IFYCLGGITLTCFLVQVATGF. Cysteine 35 is a heme c binding site. Histidine 86 and histidine 100 together coordinate heme b. The next 3 helical transmembrane spans lie at 90 to 110, 116 to 136, and 186 to 206; these read ASMMVLMMILHVFRVYLTGGF, LTWVTGVVLAVLTASFGVTGY, and LHTFVLPLLTAVFMLMHFPMI. The heme b site is built by histidine 187 and histidine 202.

Belongs to the cytochrome b family. PetB subfamily. The 4 large subunits of the cytochrome b6-f complex are cytochrome b6, subunit IV (17 kDa polypeptide, PetD), cytochrome f and the Rieske protein, while the 4 small subunits are PetG, PetL, PetM and PetN. The complex functions as a dimer. Heme b is required as a cofactor. The cofactor is heme c.

It is found in the plastid. It localises to the chloroplast thylakoid membrane. Its function is as follows. Component of the cytochrome b6-f complex, which mediates electron transfer between photosystem II (PSII) and photosystem I (PSI), cyclic electron flow around PSI, and state transitions. The polypeptide is Cytochrome b6 (Solanum bulbocastanum (Wild potato)).